Here is a 411-residue protein sequence, read N- to C-terminus: MRFIEEFINKGYFHQCTDLDRLTAITKETKIAAYIGFDCTATSLHIGSLMQIMILRLLQQHGHKPIVIIGGGTSKIGDPTWKDEVRKIVSKEDIAKNAEGIKKSLSKFIKFGDGKSDAIMLDNAEWLDSFNYLDFLRDFGSYFSVNRMLTMDSVKLRLEREQHLSFLEFNYMLLQAYDFYYLSKHYNCSLQLGGSDQWGNIVMGADLIRKISGKEVFGMTTPLLTTSSGAKMGKTAAGAVWLNEDLLSPYDYYQYWRNCEDADIVRFAKLYSEFTQEELNRFESLAAEDINAAKKQLAYELTKLCHSEQAAKSALETAVKIFEEGQIDENLPTVVLEKEVLQAGISAYELFHEAGLVTSKSEARKLIRGNGAKINDRLVEDENMIINTNFLLDKKVIKLSAGKKRHILVRV.

Position 34 (Y34) interacts with L-tyrosine. A 'HIGH' region motif is present at residues 39 to 48; that stretch reads CTATSLHIGS. Residues Y171 and Q175 each coordinate L-tyrosine. The 'KMSKS' region signature appears at 231–235; the sequence is KMGKT. ATP is bound at residue K234. One can recognise an S4 RNA-binding domain in the interval 345–411; that stretch reads ISAYELFHEA…GKKRHILVRV (67 aa).

The protein belongs to the class-I aminoacyl-tRNA synthetase family. TyrS type 1 subfamily. In terms of assembly, homodimer.

The protein resides in the cytoplasm. The catalysed reaction is tRNA(Tyr) + L-tyrosine + ATP = L-tyrosyl-tRNA(Tyr) + AMP + diphosphate + H(+). In terms of biological role, catalyzes the attachment of tyrosine to tRNA(Tyr) in a two-step reaction: tyrosine is first activated by ATP to form Tyr-AMP and then transferred to the acceptor end of tRNA(Tyr). The sequence is that of Tyrosine--tRNA ligase from Rickettsia africae (strain ESF-5).